Reading from the N-terminus, the 378-residue chain is Outer membrane porin C (378 aa).

The N-terminal stretch at 1–21 (MKVKVLSLLVPALLVAGAANA) is a signal peptide.

It belongs to the Gram-negative porin family. In terms of assembly, homotrimer.

Its subcellular location is the cell outer membrane. Functionally, forms pores that allow passive diffusion of small molecules across the outer membrane. The protein is Outer membrane porin C (ompC) of Salmonella typhimurium (strain LT2 / SGSC1412 / ATCC 700720).